We begin with the raw amino-acid sequence, 326 residues long: Eukaryotic translation initiation factor 2 subunit 1 (326 aa).

The 72-residue stretch at 24-95 (DDLIMVKVNR…QKGYIDLSKR (72 aa)) folds into the S1 motif domain. Phosphoserine; by eIK1, eIK2 and PK4 is present on Ser59. The disordered stretch occupies residues 291-326 (LDKHDGLSSDDEYSSDGDEDDSSNDDDNSSDEDDDD). The segment covering 298 to 326 (SSDDEYSSDGDEDDSSNDDDNSSDEDDDD) has biased composition (acidic residues).

It belongs to the eIF-2-alpha family. In terms of processing, phosphorylates at Ser-59 in mature trophozoites, schizonts and gametocytes but not in rings and young trophozoites. Phosphorylates at Ser-59 by eIK2 in salivary gland sporozoites but not in midgut and hemocoel sporozoites. Dephosphorylated at Ser-59 by UIS2. Phosphorylation of eIF2alpha subunit of the pre-initiation complex eIF2 inhibits recycling of inactive eIF2-GDP to active eIF2-GTP by limiting the activity of the guanine nucleotide exchange factor eIF2B and thus, inhibits protein translation.

The protein resides in the cytoplasm. It is found in the stress granule. Functionally, functions in the early steps of protein synthesis by forming a ternary complex with GTP and initiator tRNA. May regulate protein translation in response to amino acid starvation. May regulate protein at various stages of parasite development. The sequence is that of Eukaryotic translation initiation factor 2 subunit 1 from Plasmodium berghei (strain Anka).